We begin with the raw amino-acid sequence, 733 residues long: Ribosomal protein S6 kinase alpha-2 (733 aa).

One can recognise a Protein kinase 1 domain in the interval 59–318; the sequence is FELLKVLGQG…VEEIKRHPFF (260 aa). Residues 65-73 and Lys91 contribute to the ATP site; that span reads LGQGSYGKV. Asp184 serves as the catalytic Proton acceptor. The residue at position 218 (Ser218) is a Phosphoserine; by PDPK1. The 70-residue stretch at 319–388 folds into the AGC-kinase C-terminal domain; it reads VTIDWNTLYR…VASSLIQEPS (70 aa). A Phosphoserine modification is found at Ser377. One can recognise a Protein kinase 2 domain in the interval 415-672; it reads YEIKEDIGVG…AMQVLKHPWV (258 aa). Residues 421–429 and Lys444 each bind ATP; that span reads IGVGSYSVC. Asp532 acts as the Proton acceptor in catalysis.

It belongs to the protein kinase superfamily. AGC Ser/Thr protein kinase family. S6 kinase subfamily. Forms a complex with either MAPK1/ERK2 or MAPK3/ERK1 in quiescent cells. Transiently dissociates following mitogenic stimulation. Interacts with FBXO5; cooperate to induce the metaphase arrest of early blastomeres; increases and stabilizes interaction of FBXO5 with CDC20. Mg(2+) is required as a cofactor. Activated by phosphorylation at Ser-218 by PDPK1. Autophosphorylated on Ser-377, as part of the activation process. May be phosphorylated at Thr-356 and Ser-360 by MAPK1/ERK2 and MAPK3/ERK1. In terms of processing, N-terminal myristoylation results in an activated kinase in the absence of added growth factors. As to expression, widely expressed with higher expression in lung, skeletal muscle, brain, uterus, ovary, thyroid and prostate.

It is found in the nucleus. Its subcellular location is the cytoplasm. The catalysed reaction is L-seryl-[protein] + ATP = O-phospho-L-seryl-[protein] + ADP + H(+). It catalyses the reaction L-threonyl-[protein] + ATP = O-phospho-L-threonyl-[protein] + ADP + H(+). With respect to regulation, upon extracellular signal or mitogen stimulation, phosphorylated at Thr-570 in the C-terminal kinase domain (CTKD) by MAPK1/ERK2 and MAPK3/ERK1. The activated CTKD then autophosphorylates Ser-377, allowing binding of PDPK1, which in turn phosphorylates Ser-218 in the N-terminal kinase domain (NTDK) leading to the full activation of the protein and subsequent phosphorylation of the substrates by the NTKD. Serine/threonine-protein kinase that acts downstream of ERK (MAPK1/ERK2 and MAPK3/ERK1) signaling and mediates mitogenic and stress-induced activation of transcription factors, regulates translation, and mediates cellular proliferation, survival, and differentiation. May function as tumor suppressor in epithelial ovarian cancer cells. The chain is Ribosomal protein S6 kinase alpha-2 (RPS6KA2) from Homo sapiens (Human).